Reading from the N-terminus, the 712-residue chain is Voltage-gated chloride channel TMC4 (712 aa).

A disordered region spans residues 1–39 (MEENPTLESEAWGSSRGWLAPREARGAPCSSPGPSLSSV). Over 1 to 168 (MEENPTLESE…GTESYFSLLR (168 aa)) the chain is Extracellular. Asn107 carries N-linked (GlcNAc...) asparagine glycosylation. The helical transmembrane segment at 169–189 (FLLLLNVLASVLMACMTLLPT) threads the bilayer. At 190–249 (WLGGAPPGPPGPDISSPCGSYNPHSQGLVTFATQLFNLLSGEGYLEWSPLFYGFYPPRPR) the chain is on the cytoplasmic side. Residues 250–270 (LAVTYLCWAFAVGLICLLLIL) traverse the membrane as a helical segment. At 271 to 348 (HRSVSGLKQT…GQQARVWLVR (78 aa)) the chain is on the extracellular side. A helical transmembrane segment spans residues 349 to 369 (VLLNLLVVALLGAAFYGVYWA). Topologically, residues 370–394 (TGCTVELQEMPLVQELPLLKLGVNY) are cytoplasmic. The helical transmembrane segment at 395–415 (LPSIFIAGVNFVLPPVFKLIA) threads the bilayer. Topologically, residues 416 to 425 (PLEGYTRSRQ) are extracellular. The helical transmembrane segment at 426–446 (IVFILLRTVFLRLASLVVLLF) threads the bilayer. The Cytoplasmic segment spans residues 447-483 (SLWNQITCGGDSEAEDCKTCGYNYKQLPCWETVLGQE). Residues 484 to 504 (MYKLLLFDLLTVLAVALLIQF) traverse the membrane as a helical segment. Over 505 to 542 (PRKLLCGLCPGALGRLAGTQEFQVPDEVLGLIYAQTVV) the chain is Extracellular. The helical transmembrane segment at 543-565 (WVGSFFCPLLPLLNTVKFLLLFY) threads the bilayer. At 566–592 (LKKLTLFSTCSPAARTFRASAANFFFP) the chain is on the cytoplasmic side. A helical membrane pass occupies residues 593–613 (LVLLLGLAISSVPLLYSIFLI). Residues 614 to 654 (PPSKLCGPFRGQSSIWAQIPESISSLPETTQNFLFFLGTQA) are Extracellular-facing. The chain crosses the membrane as a helical span at residues 655–677 (FAVPLLLISSILMAYTVALANSY). The Cytoplasmic portion of the chain corresponds to 678 to 712 (GRLISELKRQRQTEAQNKVFLARRAVALTSTKPAL).

The protein belongs to the TMC family.

The protein localises to the membrane. It catalyses the reaction chloride(in) = chloride(out). Voltage-gated chloride channel involved in high-concentration salt taste sensation. Depolarization induced by high NaCl concentration may trigger the activation of TMC4-mediated chloride influx into taste bud cells, helping the return to resting potential. Also allows permeation of organic anions including gluconate, but their current amplitudes at positive potentials are less than that of chloride. Involved in pH and temperature-dependent modulation of salty taste. The chain is Voltage-gated chloride channel TMC4 from Homo sapiens (Human).